The primary structure comprises 746 residues: Disintegrin and metalloproteinase domain-containing protein 18 (746 aa).

The N-terminal stretch at 1–16 (MFFLLALLTELGRLQA) is a signal peptide. Residues 17–183 (HVGSEGIFLH…QKKNLSKLLP (167 aa)) constitute a propeptide that is removed on maturation. N-linked (GlcNAc...) asparagine glycans are attached at residues N36, N122, N149, N156, N177, and N294. The Extracellular portion of the chain corresponds to 177–687 (NLSKLLPQYL…EKGYNAHWNN (511 aa)). One can recognise a Peptidase M12B domain in the interval 184–381 (QYLEIYIIVE…FEAKCLQKLS (198 aa)). Cystine bridges form between C293-C376, C335-C360, C337-C342, and C450-C471. N-linked (GlcNAc...) asparagine glycans are attached at residues N359, N465, N611, and N625. One can recognise a Disintegrin domain in the interval 390 to 479 (QPVCGNGILE…DCVPDTYALN (90 aa)). Positions 620–654 (TGYNCNTTTKCKGKGICNNFGNCQCFPGHKPPDCK) constitute an EGF-like domain. 3 disulfides stabilise this stretch: C624–C636, C630–C642, and C644–C653. The helical transmembrane segment at 688–708 (WFILSFYIVLPFFIIFTIVIF) threads the bilayer. The Cytoplasmic segment spans residues 709–746 (KRNEIRKLCNRENTELIHPLYQKAMMWNINIAQNFRSK).

In terms of processing, the prodomain and the metalloprotease-like domain are cleaved during the epididymal maturation of the spermatozoa. In terms of tissue distribution, expressed predominantly in adult and prepubertal testis.

The protein localises to the membrane. Sperm surface membrane protein that may be involved in spermatogenesis and fertilization. This is a non catalytic metalloprotease-like protein. The protein is Disintegrin and metalloproteinase domain-containing protein 18 (ADAM18) of Macaca fascicularis (Crab-eating macaque).